The primary structure comprises 367 residues: (E)-2-epi-beta-caryophyllene synthase (367 aa).

Residues Asp93, Asn234, and Ser238 each coordinate Mg(2+). The DDXXE motif signature appears at 93–97 (DDIAE).

Belongs to the terpene synthase family. Mg(2+) serves as cofactor. Requires Mn(2+) as cofactor.

The enzyme catalyses (2E,6E)-farnesyl diphosphate = (E)-2-epi-beta-caryophyllene + diphosphate. The protein operates within secondary metabolite biosynthesis; terpenoid biosynthesis. In terms of biological role, sesquiterpene synthase converting farnesyl diphosphate to (E)-2-epi-beta-caryophyllene as the major product, and to two other unidentified sesquiterpenes. Has no diterpene synthase activity. This is (E)-2-epi-beta-caryophyllene synthase from Selaginella moellendorffii (Spikemoss).